We begin with the raw amino-acid sequence, 214 residues long: A-type ATP synthase subunit D (214 aa).

It belongs to the V-ATPase D subunit family. Has multiple subunits with at least A(3), B(3), C, D, E, F, H, I and proteolipid K(x).

The protein resides in the cell membrane. Functionally, component of the A-type ATP synthase that produces ATP from ADP in the presence of a proton gradient across the membrane. The chain is A-type ATP synthase subunit D from Thermococcus sibiricus (strain DSM 12597 / MM 739).